Consider the following 169-residue polypeptide: Ribosomal RNA large subunit methyltransferase H (169 aa).

S-adenosyl-L-methionine-binding positions include leucine 85, glycine 117, and 136 to 141 (LGELTW).

Belongs to the RNA methyltransferase RlmH family. Homodimer.

It is found in the cytoplasm. It catalyses the reaction pseudouridine(1915) in 23S rRNA + S-adenosyl-L-methionine = N(3)-methylpseudouridine(1915) in 23S rRNA + S-adenosyl-L-homocysteine + H(+). Functionally, specifically methylates the pseudouridine at position 1915 (m3Psi1915) in 23S rRNA. This chain is Ribosomal RNA large subunit methyltransferase H, found in Brucella ovis (strain ATCC 25840 / 63/290 / NCTC 10512).